A 513-amino-acid polypeptide reads, in one-letter code: GMP synthase [glutamine-hydrolyzing] (513 aa).

Residues 8 to 198 form the Glutamine amidotransferase type-1 domain; the sequence is KIIVLDYGSQ…ALNTCGAKGN (191 aa). The Nucleophile role is filled by cysteine 85. Catalysis depends on residues histidine 172 and glutamate 174. The GMPS ATP-PPase domain maps to 199–388; that stretch reads WSMENFIDMQ…LGMPDEIVWR (190 aa). Residue 226–232 coordinates ATP; sequence SGGVDSS.

In terms of assembly, homodimer.

The catalysed reaction is XMP + L-glutamine + ATP + H2O = GMP + L-glutamate + AMP + diphosphate + 2 H(+). It participates in purine metabolism; GMP biosynthesis; GMP from XMP (L-Gln route): step 1/1. In terms of biological role, catalyzes the synthesis of GMP from XMP. This is GMP synthase [glutamine-hydrolyzing] from Lactococcus lactis subsp. cremoris (strain SK11).